We begin with the raw amino-acid sequence, 122 residues long: Small ribosomal subunit protein uS13 (122 aa).

Residues 93–122 (RRGLPVRGQRTKTNARTRKGPKKTIAGKKK) form a disordered region.

Belongs to the universal ribosomal protein uS13 family. As to quaternary structure, part of the 30S ribosomal subunit. Forms a loose heterodimer with protein S19. Forms two bridges to the 50S subunit in the 70S ribosome.

In terms of biological role, located at the top of the head of the 30S subunit, it contacts several helices of the 16S rRNA. In the 70S ribosome it contacts the 23S rRNA (bridge B1a) and protein L5 of the 50S subunit (bridge B1b), connecting the 2 subunits; these bridges are implicated in subunit movement. Contacts the tRNAs in the A and P-sites. In Corynebacterium kroppenstedtii (strain DSM 44385 / JCM 11950 / CIP 105744 / CCUG 35717), this protein is Small ribosomal subunit protein uS13.